Here is a 134-residue protein sequence, read N- to C-terminus: Late embryogenesis abundant protein 6 (134 aa).

The span at 31 to 45 shows a compositional bias: basic and acidic residues; it reads ERAMARTKEEKEIAH. 2 disordered regions span residues 31–53 and 80–134; these read ERAMARTKEEKEIAHQRRKAKEA and VTDH…HHHY. Residues 34–70 adopt a coiled-coil conformation; sequence MARTKEEKEIAHQRRKAKEAEANMDMHMAKAAHAEDK. Residues 115 to 127 are compositionally biased toward low complexity; that stretch reads PPQTYHPTYPPTG.

This sequence belongs to the LEA type 1 family.

In terms of biological role, involved dehydration tolerance. Involved in the adaptive response of vascular plants to withstand water deficit. May possess chaperone-like activity under water deficit. In Arabidopsis thaliana (Mouse-ear cress), this protein is Late embryogenesis abundant protein 6.